The chain runs to 395 residues: Enolase (395 aa).

The substrate site is built by H136 and E145. The active-site Proton donor is the E188. Mg(2+) contacts are provided by D223, E271, and D296. Residues E271 and D296 each contribute to the substrate site. K321 (proton acceptor) is an active-site residue. Substrate contacts are provided by residues 348–351 (SHRS) and K372.

The protein belongs to the enolase family. In terms of assembly, homodimer. Requires Mg(2+) as cofactor.

It localises to the cytoplasm. The catalysed reaction is (2R)-2-phosphoglycerate = phosphoenolpyruvate + H2O. The protein operates within carbohydrate degradation; glycolysis; pyruvate from D-glyceraldehyde 3-phosphate: step 4/5. This chain is Enolase, found in Alligator mississippiensis (American alligator).